The sequence spans 902 residues: U3 small nucleolar RNA-associated protein 21 homolog (902 aa).

WD repeat units lie at residues 40-71, 80-110, 119-154, 164-198, 206-243, 249-284, 289-332, 339-373, 399-438, 447-481, 492-528, 533-568, 570-611, and 613-651; these read DIEA…LLFV, TCLK…WDID, THLD…LHTT, TSLL…RVHE, GITS…MEFK, LSCS…QNVT, FGSL…RSRN, SFVK…QSTE, TALS…GQHV, VRSV…KRKS, VTAV…DSLD, ITHA…VREL, GHSN…DSIS, and PSVC…KHVS.

In terms of assembly, interacts with snoRNA U3. Interacts with MPP10. Component of the ribosomal small subunit (SSU) processome composed of at least 40 protein subunits and snoRNA U3.

Its subcellular location is the nucleus. It localises to the nucleolus. Its function is as follows. Involved in nucleolar processing of pre-18S ribosomal RNA and ribosome assembly. The polypeptide is U3 small nucleolar RNA-associated protein 21 homolog (Schizosaccharomyces pombe (strain 972 / ATCC 24843) (Fission yeast)).